Consider the following 574-residue polypeptide: Intraflagellar transport protein 56 homolog (574 aa).

TPR repeat units follow at residues 20–52 (AQKMPELDDFLSNQDYEGAISLLNHKLKAGNLD), 57–90 (DSLQLWLAHCYYRLRNYEEAANVYTFLMNKDDAP), and 151–184 (LEDRLSLAGVNYSRMHYQDAIEVYTSVLQTSPNL).

This sequence belongs to the IFT56 family. In terms of assembly, component of the IFT complex B composed of at least che-2, che-13, dyf-1, dyf-3, dyf-6, dyf-11, dyf-13, ift-20, ift-74, ift-81, ifta-2, osm-1, osm-5 and osm-6.

It is found in the cell projection. It localises to the cilium. Component of the intraflagellar transport (IFT) complex B required for transport of proteins in the motile cilium. May be required for ciliary entrance and transport of specific ciliary cargo proteins such as che-3 which are related to motility. This chain is Intraflagellar transport protein 56 homolog, found in Caenorhabditis elegans.